A 530-amino-acid chain; its full sequence is Per os infectivity factor 1 (530 aa).

An N-terminal signal peptide occupies residues 1–15 (MHFAIILLFLLVIIA).

As to quaternary structure, forms the PIF complex together with PIF2 and PIF3. The complex also interacts with per os infectivity factor PIF0.

Its subcellular location is the virion membrane. Its function is as follows. Per os infectivity factor that mediates the specific binding of occluded virions (ODV) to the host midgut target cells. The polypeptide is Per os infectivity factor 1 (Autographa californica nuclear polyhedrosis virus (AcMNPV)).